The primary structure comprises 359 residues: Peptide chain release factor 1 (359 aa).

An N5-methylglutamine modification is found at Gln-236. The tract at residues 286–305 is disordered; the sequence is KKEMERSTMRKSQIGSGDRS.

The protein belongs to the prokaryotic/mitochondrial release factor family. Methylated by PrmC. Methylation increases the termination efficiency of RF1.

Its subcellular location is the cytoplasm. Functionally, peptide chain release factor 1 directs the termination of translation in response to the peptide chain termination codons UAG and UAA. The protein is Peptide chain release factor 1 of Wolbachia pipientis wMel.